Reading from the N-terminus, the 766-residue chain is Dipeptidyl peptidase 4 (766 aa).

Residues 1–6 are Cytoplasmic-facing; sequence MKTPWK. A helical; Signal-anchor for type II membrane protein membrane pass occupies residues 7–27; sequence VLLGLLGIAALVTVITVPVVL. Residues 28-766 lie on the Extracellular side of the membrane; that stretch reads LNKGTDDAAA…HFLKQCFSLP (739 aa). N-linked (GlcNAc...) asparagine glycans are attached at residues Asn-85, Asn-92, Asn-150, Asn-179, Asn-219, Asn-229, Asn-279, and Asn-321. Disulfide bonds link Cys-385–Cys-394, Cys-444–Cys-447, and Cys-454–Cys-472. The active-site Charge relay system is the Ser-630. Cys-649 and Cys-762 are joined by a disulfide. Residue Asn-685 is glycosylated (N-linked (GlcNAc...) asparagine). Active-site charge relay system residues include Asp-708 and His-740.

The protein belongs to the peptidase S9B family. DPPIV subfamily. Monomer. Homodimer. Heterodimer with Seprase (FAP). Requires homodimerization for optimal dipeptidyl peptidase activity and T-cell costimulation. Found in a membrane raft complex, at least composed of BCL10, CARD11, DPP4 and IKBKB. Associates with collagen. Interacts with PTPRC; the interaction is enhanced in an interleukin-12-dependent manner in activated lymphocytes. Interacts (via extracellular domain) with ADA; does not inhibit its dipeptidyl peptidase activity. Interacts with CAV1 (via the N-terminus); the interaction is direct. Interacts (via cytoplasmic tail) with CARD11 (via PDZ domain); its homodimerization is necessary for interaction with CARD11. Interacts with IGF2R; the interaction is direct. Interacts with GPC3. In terms of processing, the soluble form (Dipeptidyl peptidase 4 soluble form also named SDPP) derives from the membrane form (Dipeptidyl peptidase 4 membrane form also named MDPP) by proteolytic processing. Post-translationally, N- and O-Glycosylated. Phosphorylated. Mannose 6-phosphate residues in the carbohydrate moiety are necessary for interaction with IGF2R in activated T-cells. Mannose 6-phosphorylation is induced during T-cell activation.

Its subcellular location is the secreted. The protein resides in the cell membrane. The protein localises to the apical cell membrane. It localises to the cell projection. It is found in the invadopodium membrane. Its subcellular location is the lamellipodium membrane. The protein resides in the cell junction. The protein localises to the membrane raft. The enzyme catalyses Release of an N-terminal dipeptide, Xaa-Yaa-|-Zaa-, from a polypeptide, preferentially when Yaa is Pro, provided Zaa is neither Pro nor hydroxyproline.. Inhibited by GPC3 and diprotin A. Functionally, cell surface glycoprotein receptor involved in the costimulatory signal essential for T-cell receptor (TCR)-mediated T-cell activation. Acts as a positive regulator of T-cell coactivation, by binding at least ADA, CAV1, IGF2R, and PTPRC. Its binding to CAV1 and CARD11 induces T-cell proliferation and NF-kappa-B activation in a T-cell receptor/CD3-dependent manner. Its interaction with ADA also regulates lymphocyte-epithelial cell adhesion. In association with FAP is involved in the pericellular proteolysis of the extracellular matrix (ECM), the migration and invasion of endothelial cells into the ECM. May be involved in the promotion of lymphatic endothelial cells adhesion, migration and tube formation. When overexpressed, enhanced cell proliferation, a process inhibited by GPC3. Also acts as a serine exopeptidase with a dipeptidyl peptidase activity that regulates various physiological processes by cleaving peptides in the circulation, including many chemokines, mitogenic growth factors, neuropeptides and peptide hormones such as brain natriuretic peptide 32. Removes N-terminal dipeptides sequentially from polypeptides having unsubstituted N-termini provided that the penultimate residue is proline. The sequence is that of Dipeptidyl peptidase 4 (DPP4) from Sus scrofa (Pig).